Consider the following 150-residue polypeptide: Meiotic expression up-regulated protein 15 (150 aa).

The sequence is that of Meiotic expression up-regulated protein 15 (meu15) from Schizosaccharomyces pombe (strain 972 / ATCC 24843) (Fission yeast).